The primary structure comprises 215 residues: MIKLTARQQQVFDLIRRAIERSGFPPTRAEIAAELGFSSPNAAEEHLRALARKGVIELAAGASRGIRLLGLDDAPHQLTLPHAALMQLSLPLVGRVAAGSPILAQEHISQHYACDPALFSSKPDYLLKVRGLSMRDAGILDGDLLAVQKRAEAKDGQIIVARLGDDVTVKRLKRRPGGVELIAENPDYENIFVKAGSAEFALEGIAVGLIRPGEF.

The H-T-H motif DNA-binding region spans 28–48 (RAEIAAELGFSSPNAAEEHLR). Active-site for autocatalytic cleavage activity residues include S133 and K170.

The protein belongs to the peptidase S24 family. Homodimer.

The enzyme catalyses Hydrolysis of Ala-|-Gly bond in repressor LexA.. Its function is as follows. Represses a number of genes involved in the response to DNA damage (SOS response), including recA and lexA. In the presence of single-stranded DNA, RecA interacts with LexA causing an autocatalytic cleavage which disrupts the DNA-binding part of LexA, leading to derepression of the SOS regulon and eventually DNA repair. The polypeptide is LexA repressor (Burkholderia thailandensis (strain ATCC 700388 / DSM 13276 / CCUG 48851 / CIP 106301 / E264)).